The chain runs to 219 residues: Large ribosomal subunit protein bL25 (219 aa).

The disordered stretch occupies residues 195-219; that stretch reads EETTTTETSNEPEVIKKGKKEEEEK. Low complexity predominate over residues 197–206; the sequence is TTTTETSNEP. Residues 207 to 219 show a composition bias toward basic and acidic residues; sequence EVIKKGKKEEEEK.

This sequence belongs to the bacterial ribosomal protein bL25 family. CTC subfamily. As to quaternary structure, part of the 50S ribosomal subunit; part of the 5S rRNA/L5/L18/L25 subcomplex. Contacts the 5S rRNA. Binds to the 5S rRNA independently of L5 and L18.

This is one of the proteins that binds to the 5S RNA in the ribosome where it forms part of the central protuberance. This Fervidobacterium nodosum (strain ATCC 35602 / DSM 5306 / Rt17-B1) protein is Large ribosomal subunit protein bL25.